Reading from the N-terminus, the 312-residue chain is Protoheme IX farnesyltransferase (312 aa).

The next 8 membrane-spanning stretches (helical) occupy residues 34–54 (LVIF…HPVL), 56–76 (ITSL…NMAL), 119–139 (ILVN…YVVI), 152–172 (IVIG…AATG), 179–199 (LLLF…LALF), 225–245 (ILLY…LGYF), 248–268 (VYGV…IEVF), and 283–303 (LFAF…LEAV).

This sequence belongs to the UbiA prenyltransferase family. Protoheme IX farnesyltransferase subfamily.

It is found in the cell inner membrane. It catalyses the reaction heme b + (2E,6E)-farnesyl diphosphate + H2O = Fe(II)-heme o + diphosphate. The protein operates within porphyrin-containing compound metabolism; heme O biosynthesis; heme O from protoheme: step 1/1. Its function is as follows. Converts heme B (protoheme IX) to heme O by substitution of the vinyl group on carbon 2 of heme B porphyrin ring with a hydroxyethyl farnesyl side group. In Bradyrhizobium sp. (strain BTAi1 / ATCC BAA-1182), this protein is Protoheme IX farnesyltransferase.